Consider the following 197-residue polypeptide: Potassium-transporting ATPase KdpC subunit (197 aa).

A helical transmembrane segment spans residues P7–V27.

The protein belongs to the KdpC family. In terms of assembly, the system is composed of three essential subunits: KdpA, KdpB and KdpC.

Its subcellular location is the cell inner membrane. Its function is as follows. Part of the high-affinity ATP-driven potassium transport (or Kdp) system, which catalyzes the hydrolysis of ATP coupled with the electrogenic transport of potassium into the cytoplasm. This subunit acts as a catalytic chaperone that increases the ATP-binding affinity of the ATP-hydrolyzing subunit KdpB by the formation of a transient KdpB/KdpC/ATP ternary complex. The polypeptide is Potassium-transporting ATPase KdpC subunit (Caulobacter vibrioides (strain ATCC 19089 / CIP 103742 / CB 15) (Caulobacter crescentus)).